The chain runs to 480 residues: Glycerol 3-phosphate dehydrogenase (480 aa).

FAD is bound by residues I12, E31, 40 to 41 (TT), and 45 to 47 (SAI). Sn-glycerol 3-phosphate contacts are provided by S45 and H49. H49 acts as the Proton acceptor in catalysis. Residue V172 participates in FAD binding. Residues K249 and R310 each coordinate sn-glycerol 3-phosphate. Residue 335-336 (IE) coordinates FAD. A sn-glycerol 3-phosphate-binding site is contributed by S337. S341 contributes to the FAD binding site. The [2Fe-2S] cluster site is built by C400, C402, C437, and C442.

The cofactor is [2Fe-2S] cluster.

The enzyme catalyses sn-glycerol 3-phosphate + A = dihydroxyacetone phosphate + AH2. Its pathway is polyol metabolism; glycerol degradation via glycerol kinase pathway; glycerone phosphate from sn-glycerol 3-phosphate (aerobic route): step 1/1. Catalyzes the dehydrogenation of glycerol 3-phosphate to dihydroxyacetone phosphate. Is probably involved in anaerobic glycerol metabolism. Active in vitro with the artificial electron acceptor 2,6-dichlorophenolindophenol (DCPIP), but not with NAD or NADP. Also displays a very low oxidase activity in vitro on glycerol 3-phosphate with O2 as the electron acceptor, but this activity is most likely not physiological. The polypeptide is Glycerol 3-phosphate dehydrogenase (Caloramator mitchellensis).